A 262-amino-acid polypeptide reads, in one-letter code: Shikimate dehydrogenase (NADP(+)) (262 aa).

Shikimate contacts are provided by residues 14 to 16 (SAS) and Thr-60. Lys-64 (proton acceptor) is an active-site residue. Shikimate is bound by residues Asn-85 and Asp-100. NADP(+) is bound by residues 121 to 125 (GAGGA), 145 to 150 (NRTAER), and Phe-203. Tyr-205 contributes to the shikimate binding site. Gly-227 is an NADP(+) binding site.

The protein belongs to the shikimate dehydrogenase family. As to quaternary structure, homodimer.

It carries out the reaction shikimate + NADP(+) = 3-dehydroshikimate + NADPH + H(+). The protein operates within metabolic intermediate biosynthesis; chorismate biosynthesis; chorismate from D-erythrose 4-phosphate and phosphoenolpyruvate: step 4/7. Functionally, involved in the biosynthesis of the chorismate, which leads to the biosynthesis of aromatic amino acids. Catalyzes the reversible NADPH linked reduction of 3-dehydroshikimate (DHSA) to yield shikimate (SA). This Pyrobaculum aerophilum (strain ATCC 51768 / DSM 7523 / JCM 9630 / CIP 104966 / NBRC 100827 / IM2) protein is Shikimate dehydrogenase (NADP(+)).